We begin with the raw amino-acid sequence, 741 residues long: MLRYVYFNGFGMRQGLLKRCSSHILRRSYSSDIRNIGILAHIDAGKTTTTERMLFYAGKTRSLGEVHRGNTVTDYLTQERERGITICSSAVTFPWNGKRINLLDTPGHIDFTMEVEQSLHAVDGVIVVLDATAGVEAQTMTVWSQADKHRLPRLVFVNKMDRPDADFNKCVEDLKSKLETFPVCIQYPAKSNEGQLGIYDVITLEQLNWQQKDLGRSYSKLKLEPSDGLRQLQDKRNELIDQLSGLDDELADVVISTESFDKVSNELVNKALRRVICQQKAVPVLLGSAYKNIGIQCLMDAVNHYLPAPEERNEIYNCFGNELAGKVFKIVHDKQRGPLTLVRVMRGELKRGMRLTCSSGQAEVISKLYEPLADEYREVSVVSSGDVALCAGLKSTVTGDLLTSSQSSLKNAEKRFKQQRHSDGMSEEEDDDEDHHLDGLFDLAPQIPDAVYFCSIEPPSISSQTAMEQALRQLQREDPSLRVSYDSITGQTVLGGMGELHMDIIKSRILSEYKIDVDLGPLQIAYKETIEAPSLTTLSVEKEIAGTKQNVSITLELVKNQSEIFSLDKSPENLQNLNKLRPRIVQVLRKGSISALERGPRVGGQVVDTQIRLHNAIIGRGTADAFIMATAAQCVQKLLSENGTRLLEPIMALQIVAPSERVSSIMADLSRRRAIINDVLPKGDRNKLILINAPLAELPGYASTLRTISSGTASMTMQPCGFSNMNSSDESLAIRRAQGLE.

The N-terminal 29 residues, 1 to 29 (MLRYVYFNGFGMRQGLLKRCSSHILRRSY), are a transit peptide targeting the mitochondrion. The 280-residue stretch at 31-310 (SDIRNIGILA…AVNHYLPAPE (280 aa)) folds into the tr-type G domain. GTP-binding positions include 40–47 (AHIDAGKT), 104–108 (DTPGH), and 158–161 (NKMD). The tract at residues 408 to 436 (SLKNAEKRFKQQRHSDGMSEEEDDDEDHH) is disordered. Basic and acidic residues predominate over residues 411 to 424 (NAEKRFKQQRHSDG).

Belongs to the TRAFAC class translation factor GTPase superfamily. Classic translation factor GTPase family. EF-G/EF-2 subfamily.

It localises to the mitochondrion. Functionally, mitochondrial GTPase that mediates the disassembly of ribosomes from messenger RNA at the termination of mitochondrial protein biosynthesis. Not involved in the GTP-dependent ribosomal translocation step during translation elongation. The protein is Ribosome-releasing factor 2, mitochondrial (EF-G2) of Drosophila willistoni (Fruit fly).